A 92-amino-acid polypeptide reads, in one-letter code: Large ribosomal subunit protein eL43 (92 aa).

Residues Cys-39, Cys-42, Cys-57, and Cys-60 each coordinate Zn(2+).

It belongs to the eukaryotic ribosomal protein eL43 family. In terms of assembly, component of the large ribosomal subunit. Mature ribosomes consist of a small (40S) and a large (60S) subunit. The 40S subunit contains 32 different proteins and 1 molecule of RNA (18S). The 60S subunit contains 45 different proteins and 3 molecules of RNA (25S, 5.8S and 5S). It depends on Zn(2+) as a cofactor.

The protein resides in the cytoplasm. In terms of biological role, component of the ribosome, a large ribonucleoprotein complex responsible for the synthesis of proteins in the cell. The small ribosomal subunit (SSU) binds messenger RNAs (mRNAs) and translates the encoded message by selecting cognate aminoacyl-transfer RNA (tRNA) molecules. The large subunit (LSU) contains the ribosomal catalytic site termed the peptidyl transferase center (PTC), which catalyzes the formation of peptide bonds, thereby polymerizing the amino acids delivered by tRNAs into a polypeptide chain. The nascent polypeptides leave the ribosome through a tunnel in the LSU and interact with protein factors that function in enzymatic processing, targeting, and the membrane insertion of nascent chains at the exit of the ribosomal tunnel. This is Large ribosomal subunit protein eL43 from Candida albicans (strain SC5314 / ATCC MYA-2876) (Yeast).